The chain runs to 687 residues: Polyphosphate kinase (687 aa).

ATP is bound at residue Asn-45. The Mg(2+) site is built by Arg-375 and Arg-405. The active-site Phosphohistidine intermediate is His-435. The ATP site is built by Tyr-472, Arg-568, and His-596.

It belongs to the polyphosphate kinase 1 (PPK1) family. Mg(2+) serves as cofactor. Post-translationally, an intermediate of this reaction is the autophosphorylated ppk in which a phosphate is covalently linked to a histidine residue through a N-P bond.

The enzyme catalyses [phosphate](n) + ATP = [phosphate](n+1) + ADP. Catalyzes the reversible transfer of the terminal phosphate of ATP to form a long-chain polyphosphate (polyP). The sequence is that of Polyphosphate kinase from Burkholderia cenocepacia (strain HI2424).